Consider the following 181-residue polypeptide: Protein OPG005 (181 aa).

In Vaccinia virus (strain Copenhagen) (VACV), this protein is Protein OPG005 (OPG005).